A 444-amino-acid chain; its full sequence is Transcription factor PIF5 (444 aa).

The interval 26–39 (EDELVELLWRDGQV) is involved in interaction with phyB. Disordered regions lie at residues 154–265 (HCGS…NLSE) and 416–444 (MLGF…GKIG). A compositionally biased stretch (polar residues) spans 155–171 (CGSNQSTNIHQATTLPV). A compositionally biased stretch (basic and acidic residues) spans 175–185 (DRSKNVEERLD). Residues 187 to 197 (SSGGSSGCSYG) are compositionally biased toward low complexity. Positions 224–244 (ESVSQSDIGLTSTDDQTMGNK) are enriched in polar residues. Residues 256–265 (RAAEVHNLSE) show a composition bias toward basic and acidic residues. One can recognise a bHLH domain in the interval 256 to 305 (RAAEVHNLSERRRRDRINERMKALQELIPHCSRTDKASILDEAIDYLKSL). The segment covering 424–437 (GPQSQLSAPATTDS) has biased composition (polar residues). The residue at position 437 (Ser437) is a Phosphoserine.

Homodimer. Interacts specifically with the Pfr form of phytochrome B and with TOC1/APRR1. May form a heterodimer with PIF3. Interacts with PHYB, CRY1 and CRY2 in the nucleus in response to low blue light (LBL). Interacts with TOPP4. Associates to PTAC12/HMR/PAP5 which acts as a transcriptional coactivator. Post-translationally, phosphorylated. Additional phosphorylations induced within 60 seconds following phytochrome B photoactivation. Dephosphorylated by TOPP4 during photomorphogenesis, leading to subsequent degradation of PIF5 by the proteasomal pathway. Mainly expressed in leaves and seedlings, and, to a lower extent, in stems, fruits, flowers and roots.

Its subcellular location is the nucleus. In terms of biological role, transcription factor acting negatively in the phytochrome B signaling pathway to promote the shade-avoidance response. Regulates PHYB abundance at the post-transcriptional level, possibly via the ubiquitin-proteasome pathway. Promotes ethylene activity in the dark. May regulate the expression of a subset of genes by binding to the G-box motif. Might be involved in the integration of light-signals to control both circadian and photomorphogenic processes. Activated by CRY1 and CRY2 in response to low blue light (LBL) by direct binding at chromatin on E-box variant 5'-CA[CT]GTG-3' to stimulate specific gene expression to adapt global physiology (e.g. hypocotyl elongation in low blue light). The sequence is that of Transcription factor PIF5 from Arabidopsis thaliana (Mouse-ear cress).